Reading from the N-terminus, the 294-residue chain is Large ribosomal subunit protein uL2c (294 aa).

The interval 224 to 249 (VMNPVDHPHGGGGEGKSPIGRSRPVT) is disordered.

It belongs to the universal ribosomal protein uL2 family. Part of the 50S ribosomal subunit.

It is found in the plastid. The protein localises to the chloroplast. The protein is Large ribosomal subunit protein uL2c (rpl2) of Porphyra purpurea (Red seaweed).